The primary structure comprises 946 residues: Structure-specific endonuclease subunit SLX4 (946 aa).

Positions 1–14 (MPASPLPALSPPAS) are enriched in pro residues. Disordered stretches follow at residues 1-35 (MPASPLPALSPPASPRRNTSGASALGSRKADIPPD), 54-119 (QHFD…EEAV), 147-318 (PSDE…GGFT), 339-399 (ADSA…AAQL), 416-471 (TKVP…PKHI), 577-748 (FPLL…GSGR), and 765-799 (ALSPTPPRIHNFENSQPLPLYSVSPTRAKKPKADS). Residues 54–74 (QHFDDDIAGKDQEQSRKKSPE) are compositionally biased toward basic and acidic residues. Composition is skewed to basic residues over residues 160–169 (KAGKPRKPRA) and 182–195 (KPKRTRVTKPKAAK). Residues 278 to 287 (AVSRRRDWTP) show a composition bias toward basic and acidic residues. Over residues 453–469 (SKARSKKASTKAAAKPK) the composition is skewed to basic residues. Residues 627-636 (KANDEPDHVM) are compositionally biased toward basic and acidic residues. Residues 707–717 (KSQSAIATSGS) are compositionally biased toward polar residues. Basic and acidic residues predominate over residues 722–733 (KEPKRTKGKEVK).

Belongs to the SLX4 family. Forms a heterodimer with SLX1. In terms of processing, phosphorylated in response to DNA damage.

Its subcellular location is the nucleus. In terms of biological role, regulatory subunit of the SLX1-SLX4 structure-specific endonuclease that resolves DNA secondary structures generated during DNA repair and recombination. Has endonuclease activity towards branched DNA substrates, introducing single-strand cuts in duplex DNA close to junctions with ss-DNA. This is Structure-specific endonuclease subunit SLX4 from Phaeosphaeria nodorum (strain SN15 / ATCC MYA-4574 / FGSC 10173) (Glume blotch fungus).